Here is a 1228-residue protein sequence, read N- to C-terminus: DNA-directed RNA polymerase subunit beta (1228 aa).

The protein belongs to the RNA polymerase beta chain family. In terms of assembly, the RNAP catalytic core consists of 2 alpha, 1 beta, 1 beta' and 1 omega subunit. When a sigma factor is associated with the core the holoenzyme is formed, which can initiate transcription.

The enzyme catalyses RNA(n) + a ribonucleoside 5'-triphosphate = RNA(n+1) + diphosphate. Its function is as follows. DNA-dependent RNA polymerase catalyzes the transcription of DNA into RNA using the four ribonucleoside triphosphates as substrates. In Leptospira biflexa serovar Patoc (strain Patoc 1 / Ames), this protein is DNA-directed RNA polymerase subunit beta.